The chain runs to 275 residues: MPDIPVSQPVNPGCDAPVGVFDSGVGGLSVLNEIRQTLPNESLLYLADCGHIPYGEKTPEFIIERCLIIADFFHGQGAKALVVACNTATAAGVAHIRQRYPDWPIVGMEPAVKPAAEATRSGVVGVLATTGTLQSARFAALLDRFASDVSVVTQPCPGLVELIETGDLVSPQIRQLLQRYVEPLLAARCDTIILGCTHYPFLKPLLREMLPASVTLIDTGAAVARQLQRLLSRSGLLASGPARDTLYWSSDIPDNFGKILPFLSQMSGNVRSFRL.

Substrate is bound by residues 22-23 (DS) and 54-55 (YG). Cysteine 85 (proton donor/acceptor) is an active-site residue. Position 86-87 (86-87 (NT)) interacts with substrate. Cysteine 196 acts as the Proton donor/acceptor in catalysis. Substrate is bound at residue 197–198 (TH).

The protein belongs to the aspartate/glutamate racemases family.

The enzyme catalyses L-glutamate = D-glutamate. The protein operates within cell wall biogenesis; peptidoglycan biosynthesis. In terms of biological role, provides the (R)-glutamate required for cell wall biosynthesis. This chain is Glutamate racemase, found in Pseudomonas syringae pv. tomato (strain ATCC BAA-871 / DC3000).